A 232-amino-acid polypeptide reads, in one-letter code: MSLTDTIRNTFVPIHREGYPFIAGFFVVSLILGWLWDPLFWIGMVLTVWCIYFYRDPERVTPMDDDLVISPADGKVSFVGLAVPPAELDLGYEPMTRVSVFMNVFSVHINRSPVRGKIDKVVHRPGKFLNAELDKASTENERNSVLIESPHGKVGVVQIAGLVARRIVCWSNQDDELSVGERFGLIRFGSRVDVYLPSDATVRVAVGQTAIAGETVLADYGTERGEPVVRIA.

Serine 190 serves as the catalytic Schiff-base intermediate with substrate; via pyruvic acid. A Pyruvic acid (Ser); by autocatalysis modification is found at serine 190.

Belongs to the phosphatidylserine decarboxylase family. PSD-A subfamily. Heterodimer of a large membrane-associated beta subunit and a small pyruvoyl-containing alpha subunit. It depends on pyruvate as a cofactor. Is synthesized initially as an inactive proenzyme. Formation of the active enzyme involves a self-maturation process in which the active site pyruvoyl group is generated from an internal serine residue via an autocatalytic post-translational modification. Two non-identical subunits are generated from the proenzyme in this reaction, and the pyruvate is formed at the N-terminus of the alpha chain, which is derived from the carboxyl end of the proenzyme. The post-translation cleavage follows an unusual pathway, termed non-hydrolytic serinolysis, in which the side chain hydroxyl group of the serine supplies its oxygen atom to form the C-terminus of the beta chain, while the remainder of the serine residue undergoes an oxidative deamination to produce ammonia and the pyruvoyl prosthetic group on the alpha chain.

It localises to the cell membrane. The catalysed reaction is a 1,2-diacyl-sn-glycero-3-phospho-L-serine + H(+) = a 1,2-diacyl-sn-glycero-3-phosphoethanolamine + CO2. The protein operates within phospholipid metabolism; phosphatidylethanolamine biosynthesis; phosphatidylethanolamine from CDP-diacylglycerol: step 2/2. Its function is as follows. Catalyzes the formation of phosphatidylethanolamine (PtdEtn) from phosphatidylserine (PtdSer). The polypeptide is Phosphatidylserine decarboxylase proenzyme (Brucella canis (strain ATCC 23365 / NCTC 10854 / RM-666)).